A 405-amino-acid chain; its full sequence is GTPase Obg (405 aa).

In terms of domain architecture, Obg spans 1–159 (MKFVDEVSIF…RDLKLELKVL (159 aa)). Positions 127–148 (NTRFKSSTNRAPRQTTPGKPGE) are disordered. Residues 129–143 (RFKSSTNRAPRQTTP) show a composition bias toward polar residues. The region spanning 160 to 333 (ADVGLLGLPN…LCQDIMHYLD (174 aa)) is the OBG-type G domain. GTP-binding positions include 166–173 (GLPNAGKS), 191–195 (FTTLV), 213–216 (DIPG), 283–286 (NKAD), and 314–316 (SAL). Residues Ser-173 and Thr-193 each contribute to the Mg(2+) site. A compositionally biased stretch (acidic residues) spans 383-398 (ALEDEDDFDDEDDGDG). Positions 383-405 (ALEDEDDFDDEDDGDGPEIFYVR) are disordered.

The protein belongs to the TRAFAC class OBG-HflX-like GTPase superfamily. OBG GTPase family. As to quaternary structure, monomer. The cofactor is Mg(2+).

It localises to the cytoplasm. In terms of biological role, an essential GTPase which binds GTP, GDP and possibly (p)ppGpp with moderate affinity, with high nucleotide exchange rates and a fairly low GTP hydrolysis rate. Plays a role in control of the cell cycle, stress response, ribosome biogenesis and in those bacteria that undergo differentiation, in morphogenesis control. The chain is GTPase Obg from Azotobacter vinelandii (strain DJ / ATCC BAA-1303).